Reading from the N-terminus, the 500-residue chain is Glutamyl-tRNA(Gln) amidotransferase subunit A (500 aa).

Residues Lys-81 and Ser-161 each act as charge relay system in the active site. The active-site Acyl-ester intermediate is Ser-185.

The protein belongs to the amidase family. GatA subfamily. Heterotrimer of A, B and C subunits.

The catalysed reaction is L-glutamyl-tRNA(Gln) + L-glutamine + ATP + H2O = L-glutaminyl-tRNA(Gln) + L-glutamate + ADP + phosphate + H(+). Functionally, allows the formation of correctly charged Gln-tRNA(Gln) through the transamidation of misacylated Glu-tRNA(Gln) in organisms which lack glutaminyl-tRNA synthetase. The reaction takes place in the presence of glutamine and ATP through an activated gamma-phospho-Glu-tRNA(Gln). The polypeptide is Glutamyl-tRNA(Gln) amidotransferase subunit A (Rhodospirillum rubrum (strain ATCC 11170 / ATH 1.1.1 / DSM 467 / LMG 4362 / NCIMB 8255 / S1)).